The chain runs to 342 residues: Delta-aminolevulinic acid dehydratase (342 aa).

Zn(2+) contacts are provided by Cys133, Cys135, and Cys143. The Schiff-base intermediate with substrate role is filled by Lys210. 5-aminolevulinate contacts are provided by Arg220 and Arg232. At Ser254 the chain carries Phosphoserine. The active-site Schiff-base intermediate with substrate is the Lys263. The 5-aminolevulinate site is built by Ser290 and Tyr329.

This sequence belongs to the ALAD family. As to quaternary structure, homooctamer. It depends on Zn(2+) as a cofactor.

It catalyses the reaction 2 5-aminolevulinate = porphobilinogen + 2 H2O + H(+). It functions in the pathway porphyrin-containing compound metabolism; protoporphyrin-IX biosynthesis; coproporphyrinogen-III from 5-aminolevulinate: step 1/4. With respect to regulation, inhibited by divalent lead ions. Catalyzes an early step in the biosynthesis of tetrapyrroles. Binds two molecules of 5-aminolevulinate per subunit, each at a distinct site, and catalyzes their condensation to form porphobilinogen. The polypeptide is Delta-aminolevulinic acid dehydratase (HEM2) (Saccharomyces cerevisiae (strain ATCC 204508 / S288c) (Baker's yeast)).